The primary structure comprises 452 residues: Phosphoglucosamine mutase (452 aa).

Serine 104 acts as the Phosphoserine intermediate in catalysis. Residues serine 104, aspartate 246, aspartate 248, and aspartate 250 each contribute to the Mg(2+) site. The residue at position 104 (serine 104) is a Phosphoserine.

This sequence belongs to the phosphohexose mutase family. Mg(2+) is required as a cofactor. Activated by phosphorylation.

It carries out the reaction alpha-D-glucosamine 1-phosphate = D-glucosamine 6-phosphate. Functionally, catalyzes the conversion of glucosamine-6-phosphate to glucosamine-1-phosphate. This Streptomyces avermitilis (strain ATCC 31267 / DSM 46492 / JCM 5070 / NBRC 14893 / NCIMB 12804 / NRRL 8165 / MA-4680) protein is Phosphoglucosamine mutase.